Here is a 40-residue protein sequence, read N- to C-terminus: Photosystem II reaction center protein J (40 aa).

A helical transmembrane segment spans residues I8–F28.

The protein belongs to the PsbJ family. As to quaternary structure, PSII is composed of 1 copy each of membrane proteins PsbA, PsbB, PsbC, PsbD, PsbE, PsbF, PsbH, PsbI, PsbJ, PsbK, PsbL, PsbM, PsbT, PsbX, PsbY, PsbZ, Psb30/Ycf12, at least 3 peripheral proteins of the oxygen-evolving complex and a large number of cofactors. It forms dimeric complexes.

The protein resides in the plastid. It localises to the chloroplast thylakoid membrane. One of the components of the core complex of photosystem II (PSII). PSII is a light-driven water:plastoquinone oxidoreductase that uses light energy to abstract electrons from H(2)O, generating O(2) and a proton gradient subsequently used for ATP formation. It consists of a core antenna complex that captures photons, and an electron transfer chain that converts photonic excitation into a charge separation. The polypeptide is Photosystem II reaction center protein J (Lolium perenne (Perennial ryegrass)).